A 263-amino-acid polypeptide reads, in one-letter code: Ribosomal RNA small subunit methyltransferase A (263 aa).

6 residues coordinate S-adenosyl-L-methionine: Asn20, Leu22, Gly47, Glu68, Asp90, and Asn111.

It belongs to the class I-like SAM-binding methyltransferase superfamily. rRNA adenine N(6)-methyltransferase family. RsmA subfamily.

The protein localises to the cytoplasm. It carries out the reaction adenosine(1518)/adenosine(1519) in 16S rRNA + 4 S-adenosyl-L-methionine = N(6)-dimethyladenosine(1518)/N(6)-dimethyladenosine(1519) in 16S rRNA + 4 S-adenosyl-L-homocysteine + 4 H(+). In terms of biological role, specifically dimethylates two adjacent adenosines (A1518 and A1519) in the loop of a conserved hairpin near the 3'-end of 16S rRNA in the 30S particle. May play a critical role in biogenesis of 30S subunits. The sequence is that of Ribosomal RNA small subunit methyltransferase A from Chlorobium chlorochromatii (strain CaD3).